A 179-amino-acid polypeptide reads, in one-letter code: Large ribosomal subunit protein uL6 (179 aa).

It belongs to the universal ribosomal protein uL6 family. Part of the 50S ribosomal subunit.

Functionally, this protein binds to the 23S rRNA, and is important in its secondary structure. It is located near the subunit interface in the base of the L7/L12 stalk, and near the tRNA binding site of the peptidyltransferase center. The sequence is that of Large ribosomal subunit protein uL6 from Nocardia farcinica (strain IFM 10152).